The sequence spans 236 residues: 2,3,4,5-tetrahydropyridine-2,6-dicarboxylate N-acetyltransferase (236 aa).

This sequence belongs to the transferase hexapeptide repeat family. DapH subfamily.

It carries out the reaction (S)-2,3,4,5-tetrahydrodipicolinate + acetyl-CoA + H2O = L-2-acetamido-6-oxoheptanedioate + CoA. It participates in amino-acid biosynthesis; L-lysine biosynthesis via DAP pathway; LL-2,6-diaminopimelate from (S)-tetrahydrodipicolinate (acetylase route): step 1/3. In terms of biological role, catalyzes the transfer of an acetyl group from acetyl-CoA to tetrahydrodipicolinate. In Lactobacillus acidophilus (strain ATCC 700396 / NCK56 / N2 / NCFM), this protein is 2,3,4,5-tetrahydropyridine-2,6-dicarboxylate N-acetyltransferase.